The chain runs to 393 residues: MNSSCKTRVFNIISIIMVSMLILSLGAFANNNKAKADSHSKQLEINVKSDKVPQKVKDLAQQQFAGYAKALDKQSNAKTGKYELGEAFKIYKFNGEEDNSYYYPVIKDGKIVYTLTLSPKNKDDLNKSKEDMNYSVKISNFIAKDLDQIKDKNSNITVLTDEKGFYFEEDGKVRLVKATPLANNIKEKESAKTVSPQLKQELKTTVTPTKVEENEAIQEDQVQYENTLKNFKIREQQFDNSWCAGFSMAALLNATKNTDTYNAHDIMRTLYPEVSEQDLPNCATFPNQMIEYGKSQGRDIHYQEGVPSYNQVDQLTKDNVGIMILAQSVSQNPNDPHLGHALAVVANAKINDQEKLIYWNPWDTELSIQDADSSLLHLSFNRDYNWYGSMIGY.

The N-terminal stretch at Met1 to Ala36 is a signal peptide. The propeptide occupies Asp37 to Glu219. Residues Cys243, His340, and Asn360 contribute to the active site.

Belongs to the peptidase C47 family. In the cytoplasm, prematurely activated/folded SspB forms a stable non-covalent complex with SspC. Proteolytically cleaved by staphylococcal serine protease (SspA).

It is found in the secreted. With respect to regulation, prematurely activated/folded staphopain B is inhibited by staphostatin B (SspC), which is probably required to protect staphylococcal cytoplasmic proteins from degradation by SspB. Cysteine protease that plays an important role in the inhibition of host innate immune response. Degrades host elastin, fibrogen, fibronectin and kininogen. Blocks phagocytosis of opsonised S.aureus by neutrophils and monocytes by inducing their death in a proteolytic activity-dependent manner. Decreases surface expression of the 'don't eat me' signal CD31 on neutrophils. Cleaves host galectin-3/LGALS3, thereby inhibiting the neutrophil-activating ability of the lectin. In Staphylococcus aureus (strain MRSA252), this protein is Staphopain B (sspB).